A 152-amino-acid polypeptide reads, in one-letter code: 6,7-dimethyl-8-ribityllumazine synthase (152 aa).

Residues F21, 55–57 (AFE), and 79–81 (CVI) each bind 5-amino-6-(D-ribitylamino)uracil. 84–85 (ST) contributes to the (2S)-2-hydroxy-3-oxobutyl phosphate binding site. The active-site Proton donor is the H87. A 5-amino-6-(D-ribitylamino)uracil-binding site is contributed by F112. R126 provides a ligand contact to (2S)-2-hydroxy-3-oxobutyl phosphate.

Belongs to the DMRL synthase family. In terms of assembly, forms an icosahedral capsid composed of 60 subunits, arranged as a dodecamer of pentamers.

It carries out the reaction (2S)-2-hydroxy-3-oxobutyl phosphate + 5-amino-6-(D-ribitylamino)uracil = 6,7-dimethyl-8-(1-D-ribityl)lumazine + phosphate + 2 H2O + H(+). The protein operates within cofactor biosynthesis; riboflavin biosynthesis; riboflavin from 2-hydroxy-3-oxobutyl phosphate and 5-amino-6-(D-ribitylamino)uracil: step 1/2. Catalyzes the formation of 6,7-dimethyl-8-ribityllumazine by condensation of 5-amino-6-(D-ribitylamino)uracil with 3,4-dihydroxy-2-butanone 4-phosphate. This is the penultimate step in the biosynthesis of riboflavin. This is 6,7-dimethyl-8-ribityllumazine synthase from Staphylococcus saprophyticus subsp. saprophyticus (strain ATCC 15305 / DSM 20229 / NCIMB 8711 / NCTC 7292 / S-41).